A 103-amino-acid chain; its full sequence is NADH-quinone oxidoreductase subunit K (103 aa).

The next 3 helical transmembrane spans lie at 5–25 (ISSY…GALT), 30–50 (VVVL…LVAF), and 66–86 (LFTM…LIAL).

It belongs to the complex I subunit 4L family. NDH-1 is composed of 14 different subunits. Subunits NuoA, H, J, K, L, M, N constitute the membrane sector of the complex.

It localises to the cell membrane. The enzyme catalyses a quinone + NADH + 5 H(+)(in) = a quinol + NAD(+) + 4 H(+)(out). In terms of biological role, NDH-1 shuttles electrons from NADH, via FMN and iron-sulfur (Fe-S) centers, to quinones in the respiratory chain. The immediate electron acceptor for the enzyme in this species is believed to be a menaquinone. Couples the redox reaction to proton translocation (for every two electrons transferred, four hydrogen ions are translocated across the cytoplasmic membrane), and thus conserves the redox energy in a proton gradient. The chain is NADH-quinone oxidoreductase subunit K from Brevibacillus brevis (strain 47 / JCM 6285 / NBRC 100599).